We begin with the raw amino-acid sequence, 194 residues long: Imidazoleglycerol-phosphate dehydratase (194 aa).

Belongs to the imidazoleglycerol-phosphate dehydratase family.

The protein localises to the cytoplasm. It catalyses the reaction D-erythro-1-(imidazol-4-yl)glycerol 3-phosphate = 3-(imidazol-4-yl)-2-oxopropyl phosphate + H2O. It participates in amino-acid biosynthesis; L-histidine biosynthesis; L-histidine from 5-phospho-alpha-D-ribose 1-diphosphate: step 6/9. In Caldanaerobacter subterraneus subsp. tengcongensis (strain DSM 15242 / JCM 11007 / NBRC 100824 / MB4) (Thermoanaerobacter tengcongensis), this protein is Imidazoleglycerol-phosphate dehydratase.